The primary structure comprises 78 residues: Conotoxin ba1890.8 (78 aa).

Residues 1–22 (MKTSGRLLFLCLAVGLLLESQA) form the signal peptide. The propeptide occupies 23-61 (HPIADAEDATRNVGSDGTSVELSEILERGQDSSAEKGQR). Residues 25-78 (IADAEDATRNVGSDGTSVELSEILERGQDSSAEKGQRQNDHDVDESGHDIPFPS) form a disordered region. Residues 34-43 (NVGSDGTSVE) show a composition bias toward polar residues. Over residues 47-72 (ILERGQDSSAEKGQRQNDHDVDESGH) the composition is skewed to basic and acidic residues. At Gln-62 the chain carries Pyrrolidone carboxylic acid.

The protein belongs to the conotoxin H superfamily. In terms of tissue distribution, expressed by the venom duct.

Its subcellular location is the secreted. Functionally, probable toxin. The sequence is that of Conotoxin ba1890.8 from Conus bayani (Bayan's cone).